The primary structure comprises 245 residues: Extracellular protein ARB_04177 (245 aa).

The protein resides in the secreted. This chain is Extracellular protein ARB_04177, found in Arthroderma benhamiae (strain ATCC MYA-4681 / CBS 112371) (Trichophyton mentagrophytes).